Here is a 419-residue protein sequence, read N- to C-terminus: Imidazolonepropionase (419 aa).

Fe(3+) is bound by residues histidine 82 and histidine 84. Residues histidine 82 and histidine 84 each coordinate Zn(2+). 4-imidazolone-5-propanoate contacts are provided by arginine 91, tyrosine 154, and histidine 187. N-formimidoyl-L-glutamate is bound at residue tyrosine 154. Histidine 252 is a binding site for Fe(3+). Histidine 252 provides a ligand contact to Zn(2+). Glutamate 255 contributes to the 4-imidazolone-5-propanoate binding site. Residue aspartate 326 participates in Fe(3+) binding. Aspartate 326 contributes to the Zn(2+) binding site. 2 residues coordinate N-formimidoyl-L-glutamate: asparagine 328 and glycine 330. A 4-imidazolone-5-propanoate-binding site is contributed by serine 331.

Belongs to the metallo-dependent hydrolases superfamily. HutI family. The cofactor is Zn(2+). Fe(3+) is required as a cofactor.

It is found in the cytoplasm. The catalysed reaction is 4-imidazolone-5-propanoate + H2O = N-formimidoyl-L-glutamate. The protein operates within amino-acid degradation; L-histidine degradation into L-glutamate; N-formimidoyl-L-glutamate from L-histidine: step 3/3. Catalyzes the hydrolytic cleavage of the carbon-nitrogen bond in imidazolone-5-propanoate to yield N-formimidoyl-L-glutamate. It is the third step in the universal histidine degradation pathway. The protein is Imidazolonepropionase of Clostridium tetani (strain Massachusetts / E88).